A 159-amino-acid chain; its full sequence is Putative ribosomal RNA large subunit methyltransferase H (159 aa).

S-adenosyl-L-methionine-binding positions include L76, G108, and 127 to 132 (FSKMTF).

Belongs to the RNA methyltransferase RlmH family.

The protein localises to the cytoplasm. It catalyses the reaction pseudouridine(1915) in 23S rRNA + S-adenosyl-L-methionine = N(3)-methylpseudouridine(1915) in 23S rRNA + S-adenosyl-L-homocysteine + H(+). In terms of biological role, specifically methylates the pseudouridine at position 1915 (m3Psi1915) in 23S rRNA. This is Putative ribosomal RNA large subunit methyltransferase H from Methanococcus vannielii (strain ATCC 35089 / DSM 1224 / JCM 13029 / OCM 148 / SB).